A 463-amino-acid chain; its full sequence is MAALRALGGLRGVAAQVLRPGAGVRLPIQPSRGVRQWQPDVEWAQQFGGAVMYPSKETAHWKPPPWNDVEPPKDTIVKNMTLNFGPQHPAAHGVLRLVMELSGEMVRKCDPHIGLLHRGTEKLIEYKTYLQALPYFDRLDYVSMMCNEQAYSLAVEKLLNIRPPPRAQWIRVLFGEITRLLNHIMAVTTHALDLGAMTPFFWLFEEREKMFEFYERVSGARMHAAYIRPGGVHQDLPLGLMDDIYQFSKNFSLRLDELEELLTNNRIWRNRTIDIGVVTAEEALNYGFSGVMLRGSGIQWDLRKTQPYDVYDQVEFDVPVGSRGDCYDRYLCRVEEMRQSLRIIAQCLNKMPPGEIKVDDAKVSPPKRAEMKTSMESLIHHFKLYTEGYQVPPGATYTAIEAPKGEFGVYLVSDGSSRPYRCKIKAPGFAHLASLDKMSKGHMLADVVAIIGTQDIVFGEVDR.

The transit peptide at 1–33 directs the protein to the mitochondrion; the sequence is MAALRALGGLRGVAAQVLRPGAGVRLPIQPSRG. The residue at position 62 (K62) is an N6-acetyllysine. R118 carries the post-translational modification Symmetric dimethylarginine. [4Fe-4S] cluster is bound by residues C326, C332, and C347.

It belongs to the complex I 49 kDa subunit family. As to quaternary structure, core subunit of respiratory chain NADH dehydrogenase (Complex I) which is composed of 45 different subunits. Component of the iron-sulfur (IP) fragment of the enzyme. Interacts with NDUFAF3. Interacts with NDUFAF7. Interacts with CERS2. [4Fe-4S] cluster is required as a cofactor. Post-translationally, dimethylation at Arg-118 by NDUFAF7 takes place after NDUFS2 assembles into the complex I, leading to stabilize the early intermediate complex.

It is found in the mitochondrion inner membrane. It carries out the reaction a ubiquinone + NADH + 5 H(+)(in) = a ubiquinol + NAD(+) + 4 H(+)(out). Core subunit of the mitochondrial membrane respiratory chain NADH dehydrogenase (Complex I) which catalyzes electron transfer from NADH through the respiratory chain, using ubiquinone as an electron acceptor. Essential for the catalytic activity and assembly of complex I. Redox-sensitive, critical component of the oxygen-sensing pathway in the pulmonary vasculature which plays a key role in acute pulmonary oxygen-sensing and hypoxic pulmonary vasoconstriction. Plays an important role in carotid body sensing of hypoxia. Essential for glia-like neural stem and progenitor cell proliferation, differentiation and subsequent oligodendrocyte or neuronal maturation. In Pongo pygmaeus (Bornean orangutan), this protein is NADH dehydrogenase [ubiquinone] iron-sulfur protein 2, mitochondrial (NDUFS2).